The chain runs to 366 residues: DNA-directed RNA polymerase subunit alpha (366 aa).

The tract at residues 1 to 233 (MVREKVRVST…DLFLPFLHAE (233 aa)) is alpha N-terminal domain (alpha-NTD). The alpha C-terminal domain (alpha-CTD) stretch occupies residues 264–366 (KNEIALKSIF…KDEMGFESLE (103 aa)).

The protein belongs to the RNA polymerase alpha chain family. In plastids the minimal PEP RNA polymerase catalytic core is composed of four subunits: alpha, beta, beta', and beta''. When a (nuclear-encoded) sigma factor is associated with the core the holoenzyme is formed, which can initiate transcription.

The protein localises to the plastid. The protein resides in the chloroplast. It carries out the reaction RNA(n) + a ribonucleoside 5'-triphosphate = RNA(n+1) + diphosphate. In terms of biological role, DNA-dependent RNA polymerase catalyzes the transcription of DNA into RNA using the four ribonucleoside triphosphates as substrates. In Oenothera elata subsp. hookeri (Hooker's evening primrose), this protein is DNA-directed RNA polymerase subunit alpha.